The chain runs to 405 residues: Glucose-1-phosphate adenylyltransferase (405 aa).

Alpha-D-glucose 1-phosphate-binding positions include Y96, G161, E176–K177, and S194.

This sequence belongs to the bacterial/plant glucose-1-phosphate adenylyltransferase family. In terms of assembly, homotetramer.

The catalysed reaction is alpha-D-glucose 1-phosphate + ATP + H(+) = ADP-alpha-D-glucose + diphosphate. The protein operates within glycan biosynthesis; glycogen biosynthesis. Its function is as follows. Involved in the biosynthesis of ADP-glucose, a building block required for the elongation reactions to produce glycogen. Catalyzes the reaction between ATP and alpha-D-glucose 1-phosphate (G1P) to produce pyrophosphate and ADP-Glc. The sequence is that of Glucose-1-phosphate adenylyltransferase from Photobacterium profundum (strain SS9).